The following is a 1032-amino-acid chain: Toll-like receptor 9 (1032 aa).

A signal peptide spans 1 to 25; the sequence is MVLRRRTLHPLSLLVQAAVLAETLA. The Extracellular portion of the chain corresponds to 26-818; that stretch reads LGTLPAFLPC…LCLDEVLSWD (793 aa). A disulfide bridge links Cys-35 with Cys-45. 47 to 51 serves as a coordination point for DNA; the sequence is WLFLK. 26 LRR repeats span residues 62 to 85, 87 to 110, 122 to 147, 150 to 166, 167 to 190, 198 to 221, 223 to 242, 243 to 268, 283 to 306, 308 to 332, 333 to 356, 363 to 386, 390 to 413, 415 to 440, 471 to 495, 497 to 520, 521 to 544, 546 to 573, 575 to 599, 601 to 623, 628 to 651, 653 to 676, 677 to 700, 702 to 724, 725 to 748, and 750 to 773; these read CSNITRLSLISNRIHHLHNSDFVH, SNLRQLNLKWNCPPTGLSPLHFSC, MRTLEELNLSYNGITTVPRLPSSLVN, LSHTNILVLDANSLAGL, YSLRVLFMDGNCYYKNPCTGAVKV, LSNLTHLSLKYNNLTKVPRQLPPS, EYLLVSYNLIVKLGPEDLAN, LTSLRVLDVGGNCRRCDHAPNPCIEC, LSHLEGLVLKDSSLHTLNSSWFQG, VNLSVLDLSENFLYESITHTNAFQN, LTRLRKLNLSFNYRKKVSFARLHL, LVSLQELNMNGIFFRLLNKYTLRW, LPKLHTLHLQMNFINQAQLSIFGT, RALRFVDLSDNRISGPSTLSEATPEE, CKNFKFTMDLSRNNLVTIKPEMFVN, SRLQCLSLSHNSIAQAVNGSQFLP, LTNLQVLDLSHNKLDLYHWKSFSE, PQLQALDLSYNSQPFSMKGIGHNFSFVT, LSMLQSLSLAHNDIHTRVSSHLNSN, VRFLDFSGNGMGRMWDEGGLYLH, LSGLLKLDLSQNNLHILRPQNLDN, PKSLKLLSLRDNYLSFFNWTSLSF, LPNLEVLDLAGNQLKALTNGTLPN, TLLQKLDVSSNSIVSVVPAFFAL, AVELKEVNLSHNILKTVDRSWFGP, and VMNLTVLDVRSNPLHCACGAAFVD. Residue Asn-64 is glycosylated (N-linked (GlcNAc...) asparagine). Residues 72–77 and 95–109 each bind DNA; these read SNRIHH and KWNCPPTGLSPLHFS. Cys-98 and Cys-110 are oxidised to a cystine. An N-linked (GlcNAc...) asparagine glycan is attached at Asn-129. Tyr-132 is a DNA binding site. The N-linked (GlcNAc...) asparagine glycan is linked to Asn-147. Cys-178 and Cys-184 are disulfide-bonded. DNA is bound at residue 179–181; that stretch reads YYK. A glycan (N-linked (GlcNAc...) asparagine) is linked at Asn-200. Tyr-208 provides a ligand contact to DNA. N-linked (GlcNAc...) asparagine glycans are attached at residues Asn-210 and Asn-242. Cystine bridges form between Cys-255/Cys-268 and Cys-258/Cys-265. Residues Cys-258 and Cys-265 are each lipidated (S-palmitoyl cysteine). N-linked (GlcNAc...) asparagine glycosylation is found at Asn-300, Asn-309, Asn-332, and Asn-340. Residues 430 to 462 are disordered; that stretch reads PSTLSEATPEEADDAEQEELLSADPHPAPLSTP. The span at 437–450 shows a compositional bias: acidic residues; that stretch reads TPEEADDAEQEELL. A disulfide bond links Cys-471 and Cys-501. Asn-495 and Asn-514 each carry an N-linked (GlcNAc...) asparagine glycan. An N-linked (GlcNAc...) asparagine glycan is attached at Asn-568. 3 N-linked (GlcNAc...) asparagine glycosylation sites follow: Asn-670, Asn-695, and Asn-700. Residues Asn-732 and Asn-752 are each glycosylated (N-linked (GlcNAc...) asparagine). 2 disulfides stabilise this stretch: Cys-765–Cys-791 and Cys-767–Cys-810. Residues 819 to 839 traverse the membrane as a helical segment; sequence CFGLSLLAVAVGMVVPILHHL. Residues 840–1032 lie on the Cytoplasmic side of the membrane; sequence CGWDVWYCFH…QNFCRGPTAE (193 aa). A TIR domain is found at 868 to 1013; that stretch reads LPYDAFVVFD…GFWAQLSTAL (146 aa).

Belongs to the Toll-like receptor family. In terms of assembly, monomer and homodimer. Exists as a monomer in the absence of unmethylated cytidine-phosphate-guanosine (CpG) ligand. Proteolytic processing of an insertion loop (Z-loop) is required for homodimerization upon binding to the unmethylated CpG ligand leading to its activation. Interacts with MYD88 via their respective TIR domains. Interacts with BTK. Interacts (via transmembrane domain) with UNC93B1. Interacts with CD300LH; the interaction may promote full activation of TLR9-triggered innate responses. Interacts with CNPY3 and HSP90B1; this interaction is required for proper folding in the endoplasmic reticulum. Interacts with SMPDL3B. Interacts with CD82; this interaction is essential for TLR9-dependent myddosome formation in response to CpG stimulation. Activated by proteolytic cleavage of the flexible loop between repeats LRR14 and LRR15 within the ectodomain. Cleavage requires UNC93B1. Proteolytically processed by first removing the majority of the ectodomain by either asparagine endopeptidase (AEP) or a cathepsin followed by a trimming event that is solely cathepsin mediated and required for optimal receptor signaling. In terms of processing, palmitoylated by ZDHHC3 in the Golgi regulates TLR9 trafficking from the Golgi to endosomes. Depalmitoylation by PPT1 controls the release of TLR9 from UNC93B1 in endosomes. Expressed in the basolateral region of gastric epithelial cells with high levels detected in antrum and body mucosa (at protein level). Detected in spleen and stomach at higher levels in C57BL/6 mice than BALB/C.

Its subcellular location is the endoplasmic reticulum membrane. It is found in the endosome. The protein resides in the lysosome. It localises to the cytoplasmic vesicle. The protein localises to the phagosome. Functionally, key component of innate and adaptive immunity. TLRs (Toll-like receptors) control host immune response against pathogens through recognition of molecular patterns specific to microorganisms. TLR9 is a nucleotide-sensing TLR which is activated by unmethylated cytidine-phosphate-guanosine (CpG) dinucleotides. Acts via MYD88 and TRAF6, leading to NF-kappa-B activation, cytokine secretion and the inflammatory response. Plays a role in defense against systemic mouse cytomegalovirus infection. Controls lymphocyte response to Helicobacter infection. Upon CpG stimulation, induces B-cell proliferation, activation, survival and antibody production. The sequence is that of Toll-like receptor 9 (Tlr9) from Mus musculus (Mouse).